Reading from the N-terminus, the 316-residue chain is Probable cell division protein WhiA (316 aa).

A DNA-binding region (H-T-H motif) is located at residues 276–309; the sequence is SLEELGKIAEPQITKDAIAGRIRRLLQLAEKTEK.

It belongs to the WhiA family.

Functionally, involved in cell division and chromosome segregation. The polypeptide is Probable cell division protein WhiA (Bifidobacterium longum subsp. infantis (strain ATCC 15697 / DSM 20088 / JCM 1222 / NCTC 11817 / S12)).